Consider the following 478-residue polypeptide: MILQSNSIAQQIADEGGVEAYLHAQQHKTMLRFLTCGSVDDGKSTLIGRLLHDTRQIYEDQLSTLHTDSKRIGTQGEKLDLALLVDGLQAEREQGITIDVAYRYFSTEKRKFIIADTPGHEQYTRNMATGASTCDLAILLIDARKGVLDQTRRHSFIATLLGIRHLVVAVNKMDLVGFQESVFTQFKDDYLSFAEQLPTDLDIKFVPLSALDGDNVASPSEKMDWYSGPTLLEILESVDVVNARRQQPLRFPVQYVNRPNLDFRGYAGTLSAGVVWVGQKVKVLPSGVESTVARIVTFDGDLTEANPGEAITLVLADEVDISRGDLLVDASETLKAARNALVDVVWMAEQPLVVGQSYDIKVAGKKTRARVENIQYQVEINSLTQRVVENLPLNGIGLVELAFDEPLLLDNYQRNRDTGGMIFIDRLSNVTVGAGLVREALASVYQENHDFSTFELELNALVRRHFPHWGARDLLGGK.

Positions 28 to 244 (KTMLRFLTCG…LESVDVVNAR (217 aa)) constitute a tr-type G domain. The tract at residues 37-44 (GSVDDGKS) is G1. Residue 37–44 (GSVDDGKS) participates in GTP binding. Residues 95-99 (GITID) form a G2 region. Positions 116–119 (DTPG) are G3. GTP is bound by residues 116–120 (DTPGH) and 171–174 (NKMD). The tract at residues 171 to 174 (NKMD) is G4. A G5 region spans residues 209 to 211 (SAL).

Belongs to the TRAFAC class translation factor GTPase superfamily. Classic translation factor GTPase family. CysN/NodQ subfamily. As to quaternary structure, heterodimer composed of CysD, the smaller subunit, and CysN.

It catalyses the reaction sulfate + ATP + H(+) = adenosine 5'-phosphosulfate + diphosphate. Its pathway is sulfur metabolism; hydrogen sulfide biosynthesis; sulfite from sulfate: step 1/3. Its function is as follows. With CysD forms the ATP sulfurylase (ATPS) that catalyzes the adenylation of sulfate producing adenosine 5'-phosphosulfate (APS) and diphosphate, the first enzymatic step in sulfur assimilation pathway. APS synthesis involves the formation of a high-energy phosphoric-sulfuric acid anhydride bond driven by GTP hydrolysis by CysN coupled to ATP hydrolysis by CysD. This is Sulfate adenylyltransferase subunit 1 from Yersinia pseudotuberculosis serotype O:1b (strain IP 31758).